The sequence spans 68 residues: MKKIKLKTKSSVKKRFHLTAKGKVISTQSGKRHGMVKRSKSNIRNQRGTTILGKSDSRIVKLHMPYGI.

The protein belongs to the bacterial ribosomal protein bL35 family.

In Wolbachia pipientis wMel, this protein is Large ribosomal subunit protein bL35.